Consider the following 273-residue polypeptide: Shikimate dehydrogenase (NADP(+)) (273 aa).

Shikimate contacts are provided by residues 19 to 21 and threonine 66; that span reads SKS. The active-site Proton acceptor is lysine 70. The shikimate site is built by asparagine 91 and aspartate 107. NADP(+) contacts are provided by residues 131–135 and methionine 218; that span reads GAGGA. A shikimate-binding site is contributed by tyrosine 220. Residue glycine 242 participates in NADP(+) binding.

It belongs to the shikimate dehydrogenase family. In terms of assembly, homodimer.

The enzyme catalyses shikimate + NADP(+) = 3-dehydroshikimate + NADPH + H(+). The protein operates within metabolic intermediate biosynthesis; chorismate biosynthesis; chorismate from D-erythrose 4-phosphate and phosphoenolpyruvate: step 4/7. In terms of biological role, involved in the biosynthesis of the chorismate, which leads to the biosynthesis of aromatic amino acids. Catalyzes the reversible NADPH linked reduction of 3-dehydroshikimate (DHSA) to yield shikimate (SA). This is Shikimate dehydrogenase (NADP(+)) from Buchnera aphidicola subsp. Acyrthosiphon pisum (strain 5A).